The following is a 249-amino-acid chain: 23S rRNA (guanosine-2'-O-)-methyltransferase RlmB (249 aa).

Positions 197, 217, and 226 each coordinate S-adenosyl-L-methionine.

The protein belongs to the class IV-like SAM-binding methyltransferase superfamily. RNA methyltransferase TrmH family. RlmB subfamily.

It localises to the cytoplasm. It catalyses the reaction guanosine(2251) in 23S rRNA + S-adenosyl-L-methionine = 2'-O-methylguanosine(2251) in 23S rRNA + S-adenosyl-L-homocysteine + H(+). In terms of biological role, specifically methylates the ribose of guanosine 2251 in 23S rRNA. The protein is 23S rRNA (guanosine-2'-O-)-methyltransferase RlmB of Ralstonia nicotianae (strain ATCC BAA-1114 / GMI1000) (Ralstonia solanacearum).